We begin with the raw amino-acid sequence, 69 residues long: Double-strand break reduction protein (69 aa).

Helps to maintain the integrity of the chromosome by lowering the steady-state level of double strand breaks. This region of DNA acts as an antitoxin to toxin RalR, a DNase, but it seems to be sRNA RalA that has the antitoxin activity and not this putative protein. Therefore the identity of this as a protein-coding gene has been cast into doubt. The protein is Double-strand break reduction protein of Escherichia coli (strain K12).